A 154-amino-acid chain; its full sequence is MRILGIDPGLARVGYGVIDTSNGQQQMLDCGIIRTNPGIDDGVRMVEIASDLRQLIRRWKPQLAAVEKFFFYRSSTTISVVQARGVIIMTLARFRVPMVEFPPMQIKLALAGSGHAEKDEVLDAVMRELNLDQPPRPDDAADALAIALTGWFQR.

Catalysis depends on residues Asp-7, Glu-67, and Asp-139. Mg(2+) contacts are provided by Asp-7, Glu-67, and Asp-139.

This sequence belongs to the RuvC family. In terms of assembly, homodimer which binds Holliday junction (HJ) DNA. The HJ becomes 2-fold symmetrical on binding to RuvC with unstacked arms; it has a different conformation from HJ DNA in complex with RuvA. In the full resolvosome a probable DNA-RuvA(4)-RuvB(12)-RuvC(2) complex forms which resolves the HJ. Requires Mg(2+) as cofactor.

It localises to the cytoplasm. It catalyses the reaction Endonucleolytic cleavage at a junction such as a reciprocal single-stranded crossover between two homologous DNA duplexes (Holliday junction).. Functionally, the RuvA-RuvB-RuvC complex processes Holliday junction (HJ) DNA during genetic recombination and DNA repair. Endonuclease that resolves HJ intermediates. Cleaves cruciform DNA by making single-stranded nicks across the HJ at symmetrical positions within the homologous arms, yielding a 5'-phosphate and a 3'-hydroxyl group; requires a central core of homology in the junction. The consensus cleavage sequence is 5'-(A/T)TT(C/G)-3'. Cleavage occurs on the 3'-side of the TT dinucleotide at the point of strand exchange. HJ branch migration catalyzed by RuvA-RuvB allows RuvC to scan DNA until it finds its consensus sequence, where it cleaves and resolves the cruciform DNA. This Prochlorococcus marinus (strain MIT 9303) protein is Crossover junction endodeoxyribonuclease RuvC.